The chain runs to 479 residues: Neuronal acetylcholine receptor subunit alpha-9 (479 aa).

The first 25 residues, Met1 to Thr25, serve as a signal peptide directing secretion. At Ala26 to Ser237 the chain is on the extracellular side. A glycan (N-linked (GlcNAc...) asparagine) is linked at Asn57. Cys155 and Cys169 are disulfide-bonded. Asn170 carries an N-linked (GlcNAc...) asparagine glycan. Na(+)-binding residues include Ser191 and Asp193. Cysteines 219 and 220 form a disulfide. The next 3 helical transmembrane spans lie at Ser238 to Pro262, Val269 to Ala287, and Tyr302 to Ile323. Residues His324–Arg457 lie on the Cytoplasmic side of the membrane. A helical transmembrane segment spans residues Phe458–Ala476.

The protein belongs to the ligand-gated ion channel (TC 1.A.9) family. Acetylcholine receptor (TC 1.A.9.1) subfamily. Alpha-9/CHRNA9 sub-subfamily. In terms of assembly, forms homo- or heterooligomeric channels in conjunction with CHRNA10. The native outer hair cell receptor may be composed of CHRNA9:CHRNA10 heterooligomers. Found in the stoichiometric form (CHRNA9)2:(CHRNA10)3. In terms of tissue distribution, detected in the nasal epithelium, in the outer hair cells of the cochlea, in the pars tuberalis of the hypophysis, and in the developing muscle of the tongue. Also expressed in the neurons of dorsal root ganglia.

It is found in the synaptic cell membrane. The protein resides in the cell membrane. It carries out the reaction Ca(2+)(in) = Ca(2+)(out). It catalyses the reaction Mg(2+)(in) = Mg(2+)(out). The catalysed reaction is K(+)(in) = K(+)(out). The enzyme catalyses Na(+)(in) = Na(+)(out). Its activity is regulated as follows. Activated by a myriad of ligands such as acetylcholine. AChR activity is inhibited by the antagonist alpha-conotoxins RgIA and GeXXA, small disulfide-constrained peptides from cone snails. Its function is as follows. Component of neuronal acetylcholine receptors (nAChRs) that function as pentameric, ligand-gated cation channels with high calcium permeability among other activities. nAChRs are excitatory neurotrasnmitter receptors formed by a collection of nAChR subunits known to mediate synaptic transmission in the nervous system and the neuromuscular junction. Each nAchR subunit confers differential attributes to channel properties, including activation, deactivation and desensitization kinetics, pH sensitivity, cation permeability, and binding to allosteric modulators. Forms either homopentamers or heteropentamers with CHRNA10. Expressed in the inner ear, in sympathetic neurons and in other non-neuronal cells, such as skin keratinocytes and lymphocytes. nAChR formed by CHRNA9:CHRNA10 mediate central nervous system control of auditory and vestibular sensory processing. The channel is permeable to a range of divalent cations including calcium, the influx of which may activate a potassium current which hyperpolarizes the cell membrane. In the ear, mediates synaptic transmission between efferent olivocochlear fibers and hair cells of the cochlea, this may lead to a reduction in basilar membrane motion, altering the activity of auditory nerve fibers and reducing the range of dynamic hearing. This may protect against acoustic trauma. May also regulate keratinocyte adhesion. In Rattus norvegicus (Rat), this protein is Neuronal acetylcholine receptor subunit alpha-9 (Chrna9).